Here is a 373-residue protein sequence, read N- to C-terminus: P2Y purinoceptor 2 (373 aa).

Residues 1–32 are Extracellular-facing; that stretch reads MAADLEPWNSTINGTWEGDELGYKCRFNEDFK. 2 N-linked (GlcNAc...) asparagine glycosylation sites follow: N9 and N13. Residues 33–59 form a helical membrane-spanning segment; the sequence is YVLLPVSYGVVCVLGLCLNVVALYIFL. At 60–70 the chain is on the cytoplasmic side; it reads CRLKTWNASTT. A helical transmembrane segment spans residues 71 to 93; sequence YMFHLAVSDSLYAASLPLLVYYY. Residues 94 to 110 are Extracellular-facing; the sequence is ARGDHWPFSTVLCKLVR. An intrachain disulfide couples C106 to C183. A helical transmembrane segment spans residues 111–129; the sequence is FLFYTNLYCSILFLTCISV. Residues 130 to 152 are Cytoplasmic-facing; sequence HRCLGVLRPLHSLRWGRARYARR. Residues 153–172 traverse the membrane as a helical segment; that stretch reads VAAVVWVLVLACQAPVLYFV. Over 173–194 the chain is Extracellular; sequence TTSVRGTRITCHDTSARELFSH. A helical membrane pass occupies residues 195 to 220; that stretch reads FVAYSSVMLGLLFAVPFSVILVCYVL. Topologically, residues 221-246 are cytoplasmic; it reads MARRLLKPAYGTTGGLPRAKRKSVRT. A helical membrane pass occupies residues 247 to 269; the sequence is IALVLAVFALCFLPFHVTRTLYY. The Extracellular portion of the chain corresponds to 270-287; it reads SFRSLDLSCHTLNAINMA. Residues 288-309 traverse the membrane as a helical segment; that stretch reads YKITRPLASANSCLDPVLYFLA. Over 310–373 the chain is Cytoplasmic; that stretch reads GQRLVRFARD…AGSETKDIRL (64 aa). Residues 318 to 373 form a disordered region; sequence RDAKPPTEPTPSPQARRKLGLHRPNRTVRKDLSVSSDDSRRTESTPAGSETKDIRL. The span at 332-344 shows a compositional bias: basic residues; that stretch reads ARRKLGLHRPNRT. Basic and acidic residues predominate over residues 345 to 360; sequence VRKDLSVSSDDSRRTE.

It belongs to the G-protein coupled receptor 1 family. As to expression, spleen, testis, kidney, liver, lung, heart and brain.

It is found in the cell membrane. Receptor for ATP and UTP coupled to G-proteins that activate a phosphatidylinositol-calcium second messenger system. The affinity range is UTP = ATP &gt; ATP-gamma-S &gt;&gt; 2-methylthio-ATP = ADP. The sequence is that of P2Y purinoceptor 2 (P2ry2) from Mus musculus (Mouse).